A 638-amino-acid polypeptide reads, in one-letter code: Chaperone protein DnaK (638 aa).

Threonine 200 carries the phosphothreonine; by autocatalysis modification. The interval 598–621 is disordered; it reads SLHMAATAEQQSGSTGAGAGASAK.

This sequence belongs to the heat shock protein 70 family.

Acts as a chaperone. This is Chaperone protein DnaK from Xylella fastidiosa (strain M23).